A 478-amino-acid chain; its full sequence is Cytochrome c-552 (478 aa).

Positions 1–27 (MKKQWTRRSAAAIAMVTTLLLSSHSFA) are cleaved as a signal peptide. His91 provides a ligand contact to heme c. Heme is bound by residues Cys119, Cys122, and Lys123. Heme c contacts are provided by Cys157, Cys160, His161, Cys206, Cys209, and His210. Ca(2+) contacts are provided by Glu212, Tyr213, Lys258, and Gln260. Position 213 (Tyr213) interacts with substrate. His261 lines the substrate pocket. Heme c-binding residues include His272, Cys279, Cys282, His283, His298, Cys311, Cys314, His315, and His390.

Belongs to the cytochrome c-552 family. Ca(2+) serves as cofactor. Requires heme c as cofactor.

The protein resides in the periplasm. It carries out the reaction 6 Fe(III)-[cytochrome c] + NH4(+) + 2 H2O = 6 Fe(II)-[cytochrome c] + nitrite + 8 H(+). The protein operates within nitrogen metabolism; nitrate reduction (assimilation). Catalyzes the reduction of nitrite to ammonia, consuming six electrons in the process. The protein is Cytochrome c-552 of Aliivibrio fischeri (strain ATCC 700601 / ES114) (Vibrio fischeri).